Here is a 746-residue protein sequence, read N- to C-terminus: H(+)/Cl(-) exchange transporter 5 (746 aa).

Over 1–54 (MDFLEEPIPGVGTYDDFNTIDWVREKSRDRDRHREITNRSKESTWALIHSVSDA) the chain is Cytoplasmic. 2 consecutive transmembrane segments (helical) span residues 55-92 (FSGW…ICTE) and 138-161 (VNYF…VKVF). The short motif at 167–171 (GSGIP) is the Selectivity filter part_1 element. Position 168 (S168) interacts with chloride. The helical intramembrane region spans 170 to 177 (IPEIKTIL). 2 consecutive transmembrane segments (helical) span residues 186–205 (LGKW…VSSG) and 211–230 (EGPL…HCFN). The short motif at 209–213 (GKEGP) is the Selectivity filter part_2 element. 2 intramembrane regions (helical) span residues 242 to 254 (VLSA…VSVA) and 258 to 266 (PIGGVLFSL). 5 helical membrane passes run 278 to 296 (LWRS…RSIN), 319 to 344 (LVPF…IAWC), 352 to 372 (LGKY…ILAF), 428 to 448 (MWQL…TFGM), and 453 to 472 (GLFI…LGVG). The Selectivity filter part_3 signature appears at 453 to 457 (GLFIP). F455 serves as a coordination point for chloride. The segment at residues 500–514 (GLYAMVGAAACLGGV) is an intramembrane region (helical). The note=Loop between two helices intramembrane region spans 515 to 517 (TRM). Positions 518–529 (TVSLVVIMFELT) form an intramembrane region, helical. Positions 530–534 (GGLEY) form an intramembrane region, note=Loop between two helices. Residues 535–552 (IVPLMAAAMTSKWVADAL) form a helical membrane-spanning segment. Topologically, residues 553–746 (GREGIYDAHI…NQDPDSILFN (194 aa)) are cytoplasmic. Y558 is a chloride binding site. 2 CBS domains span residues 586–650 (MKPR…ARKE) and 682–742 (ILDL…DPDS). Residues T596, 617–619 (YSG), and 724–727 (TKKD) each bind ATP.

Belongs to the chloride channel (TC 2.A.49) family. ClC-5/CLCN5 subfamily. Interacts with NEDD4 and NEDD4L. Post-translationally, ubiquitinated by NEDD4L in the presence of albumin; which promotes endocytosis and proteasomal degradation. As to expression, detected in duodenum, jejunum and ileum. Detected in crypt and villus regions of the epithelium of the small intestine.

The protein localises to the golgi apparatus membrane. It localises to the endosome membrane. It is found in the cell membrane. It carries out the reaction 2 chloride(in) + H(+)(out) = 2 chloride(out) + H(+)(in). Proton-coupled chloride transporter. Functions as antiport system and exchanges chloride ions against protons. Important for normal acidification of the endosome lumen. May play an important role in renal tubular function. The CLC channel family contains both chloride channels and proton-coupled anion transporters that exchange chloride or another anion for protons. The absence of conserved gating glutamate residues is typical for family members that function as channels. The sequence is that of H(+)/Cl(-) exchange transporter 5 (CLCN5) from Cavia porcellus (Guinea pig).